The sequence spans 285 residues: uncharacterized protein (285 aa).

Position 168 (serine 168) interacts with substrate. Tyrosine 181 serves as the catalytic Proton acceptor.

This sequence belongs to the short-chain dehydrogenases/reductases (SDR) family.

This is an uncharacterized protein from Haemophilus influenzae (strain ATCC 51907 / DSM 11121 / KW20 / Rd).